A 432-amino-acid chain; its full sequence is Ornithine decarboxylase 1A, chloroplastic (432 aa).

N6-(pyridoxal phosphate)lysine is present on Lys-95. Pyridoxal 5'-phosphate-binding positions include Ser-227, Gly-265, and 298–301 (EPGR). Residue 341-342 (YD) participates in substrate binding. Cys-377 (proton donor; shared with dimeric partner) is an active-site residue. Asp-378 provides a ligand contact to substrate. Tyr-406 lines the pyridoxal 5'-phosphate pocket.

This sequence belongs to the Orn/Lys/Arg decarboxylase class-II family. In terms of assembly, homodimer. Only the dimer is catalytically active, as the active sites are constructed of residues from both monomers. The cofactor is pyridoxal 5'-phosphate.

The protein localises to the plastid. The protein resides in the chloroplast. The enzyme catalyses L-ornithine + H(+) = putrescine + CO2. The protein operates within alkaloid biosynthesis; nicotine biosynthesis. It participates in amine and polyamine biosynthesis; putrescine biosynthesis via L-ornithine pathway; putrescine from L-ornithine: step 1/1. Involved in the biosynthesis of pyridine alkaloid natural products, leading mainly to the production of anabasine, anatabine, nicotine and nornicotine, effective deterrents against herbivores with antiparasitic and pesticide properties (neurotoxins); nornicotine serves as the precursor in the synthesis of the carcinogen compound N'-nitrosonornicotine (NNN). Catalyzes the first and rate-limiting step of polyamine biosynthesis that converts ornithine into putrescine, which is the precursor for the polyamines, spermidine and spermine. Polyamines are essential for cell proliferation and are implicated in cellular processes, ranging from DNA replication to apoptosis. The chain is Ornithine decarboxylase 1A, chloroplastic from Nicotiana tabacum (Common tobacco).